The primary structure comprises 295 residues: Ribosomal protein L11 methyltransferase (295 aa).

Residues T146, G167, D189, and N231 each coordinate S-adenosyl-L-methionine.

The protein belongs to the methyltransferase superfamily. PrmA family.

It localises to the cytoplasm. The catalysed reaction is L-lysyl-[protein] + 3 S-adenosyl-L-methionine = N(6),N(6),N(6)-trimethyl-L-lysyl-[protein] + 3 S-adenosyl-L-homocysteine + 3 H(+). Methylates ribosomal protein L11. The chain is Ribosomal protein L11 methyltransferase from Vibrio vulnificus (strain YJ016).